The sequence spans 321 residues: Probable 1-aminocyclopropane-1-carboxylate oxidase (321 aa).

Positions Pro159–Pro259 constitute a Fe2OG dioxygenase domain. Positions 183, 185, and 240 each coordinate Fe cation.

The protein belongs to the iron/ascorbate-dependent oxidoreductase family. Fe cation serves as cofactor.

It carries out the reaction 1-aminocyclopropane-1-carboxylate + L-ascorbate + O2 = ethene + L-dehydroascorbate + hydrogen cyanide + CO2 + 2 H2O. It functions in the pathway alkene biosynthesis; ethylene biosynthesis via S-adenosyl-L-methionine; ethylene from S-adenosyl-L-methionine: step 2/2. This Dianthus caryophyllus (Carnation) protein is Probable 1-aminocyclopropane-1-carboxylate oxidase (ACO).